Reading from the N-terminus, the 221-residue chain is 7-cyano-7-deazaguanine synthase (221 aa).

ATP is bound at residue 9-19 (YSGGMDSFTLL). Zn(2+) is bound by residues Cys-185, Cys-193, Cys-196, and Cys-199.

This sequence belongs to the QueC family. Zn(2+) serves as cofactor.

The catalysed reaction is 7-carboxy-7-deazaguanine + NH4(+) + ATP = 7-cyano-7-deazaguanine + ADP + phosphate + H2O + H(+). It participates in purine metabolism; 7-cyano-7-deazaguanine biosynthesis. In terms of biological role, catalyzes the ATP-dependent conversion of 7-carboxy-7-deazaguanine (CDG) to 7-cyano-7-deazaguanine (preQ(0)). In Marinobacter nauticus (strain ATCC 700491 / DSM 11845 / VT8) (Marinobacter aquaeolei), this protein is 7-cyano-7-deazaguanine synthase.